The sequence spans 89 residues: DNA/RNA-binding protein Alba 2 (89 aa).

Belongs to the histone-like Alba family. Forms homodimers and homotetramers. Interacts with Alba 1.

It localises to the cytoplasm. Its subcellular location is the chromosome. Functionally, binds double-stranded DNA tightly but without sequence specificity. Involved in DNA compaction. The sequence is that of DNA/RNA-binding protein Alba 2 from Archaeoglobus fulgidus (strain ATCC 49558 / DSM 4304 / JCM 9628 / NBRC 100126 / VC-16).